We begin with the raw amino-acid sequence, 531 residues long: DnaJ homolog subfamily C member 21 (531 aa).

In terms of domain architecture, J spans 3 to 69; that stretch reads CHYEALGVRR…QERAWYDNHR (67 aa). Disordered stretches follow at residues 279–311, 327–474, and 502–531; these read FGDGSDENEMEEHELKDEEDGKDSDEAEDAELY, KAMK…VPAE, and KATGHARAPSSSSLNSATSSQSKKEKRKNR. The span at 281–311 shows a compositional bias: acidic residues; sequence DGSDENEMEEHELKDEEDGKDSDEAEDAELY. Phosphoserine is present on residues Ser283 and Ser302. The segment at 314 to 338 adopts a C2H2-type 1 zinc-finger fold; the sequence is LYCPACDKSFKTEKAMKNHEKSKKH. A compositionally biased stretch (acidic residues) spans 364–375; sequence NPLDDNSEEEME. At Ser370 the chain carries Phosphoserine. Over residues 381-392 the composition is skewed to basic residues; it reads KLSKKQKKKKQK. The segment covering 393–403 has biased composition (polar residues); sequence PAQNYDDNFNV. The segment covering 442–453 has biased composition (basic and acidic residues); that stretch reads KPCDDPKSEAKS. The segment covering 455–464 has biased composition (basic residues); it reads PKPKGKKTKD. The C2H2-type 2 zinc-finger motif lies at 482–506; the sequence is ISCTTCHSEFPSRNKLFDHLKATGH. Ser511 bears the Phosphoserine mark. The segment covering 511 to 522 has biased composition (low complexity); it reads SSSSLNSATSSQ.

As to quaternary structure, interacts with HSPA8, PA2G4 and ZNF622. Expressed in brain, placenta, kidney and pancreas.

It localises to the cytoplasm. It is found in the nucleus. The protein localises to the nucleolus. Its function is as follows. May act as a co-chaperone for HSP70. May play a role in ribosomal RNA (rRNA) biogenesis, possibly in the maturation of the 60S subunit. Binds the precursor 45S rRNA. This chain is DnaJ homolog subfamily C member 21 (DNAJC21), found in Homo sapiens (Human).